A 333-amino-acid chain; its full sequence is Holliday junction branch migration complex subunit RuvB (333 aa).

A large ATPase domain (RuvB-L) region spans residues M1–Y182. ATP-binding positions include I21, R22, G63, K66, T67, T68, E129–Y131, R172, Y182, and R219. Residue T67 coordinates Mg(2+). The small ATPAse domain (RuvB-S) stretch occupies residues N183–Q253. The interval R256–K333 is head domain (RuvB-H). Positions 311 and 316 each coordinate DNA.

It belongs to the RuvB family. As to quaternary structure, homohexamer. Forms an RuvA(8)-RuvB(12)-Holliday junction (HJ) complex. HJ DNA is sandwiched between 2 RuvA tetramers; dsDNA enters through RuvA and exits via RuvB. An RuvB hexamer assembles on each DNA strand where it exits the tetramer. Each RuvB hexamer is contacted by two RuvA subunits (via domain III) on 2 adjacent RuvB subunits; this complex drives branch migration. In the full resolvosome a probable DNA-RuvA(4)-RuvB(12)-RuvC(2) complex forms which resolves the HJ.

Its subcellular location is the cytoplasm. The catalysed reaction is ATP + H2O = ADP + phosphate + H(+). In terms of biological role, the RuvA-RuvB-RuvC complex processes Holliday junction (HJ) DNA during genetic recombination and DNA repair, while the RuvA-RuvB complex plays an important role in the rescue of blocked DNA replication forks via replication fork reversal (RFR). RuvA specifically binds to HJ cruciform DNA, conferring on it an open structure. The RuvB hexamer acts as an ATP-dependent pump, pulling dsDNA into and through the RuvAB complex. RuvB forms 2 homohexamers on either side of HJ DNA bound by 1 or 2 RuvA tetramers; 4 subunits per hexamer contact DNA at a time. Coordinated motions by a converter formed by DNA-disengaged RuvB subunits stimulates ATP hydrolysis and nucleotide exchange. Immobilization of the converter enables RuvB to convert the ATP-contained energy into a lever motion, pulling 2 nucleotides of DNA out of the RuvA tetramer per ATP hydrolyzed, thus driving DNA branch migration. The RuvB motors rotate together with the DNA substrate, which together with the progressing nucleotide cycle form the mechanistic basis for DNA recombination by continuous HJ branch migration. Branch migration allows RuvC to scan DNA until it finds its consensus sequence, where it cleaves and resolves cruciform DNA. This is Holliday junction branch migration complex subunit RuvB from Halalkalibacterium halodurans (strain ATCC BAA-125 / DSM 18197 / FERM 7344 / JCM 9153 / C-125) (Bacillus halodurans).